We begin with the raw amino-acid sequence, 129 residues long: Follitropin subunit beta (129 aa).

An N-terminal signal peptide occupies residues M1 to C18. 6 cysteine pairs are disulfide-bonded: C21–C69, C35–C84, C38–C122, C46–C100, C50–C102, and C105–C112. N-linked (GlcNAc...) asparagine glycans are attached at residues N25 and N42.

This sequence belongs to the glycoprotein hormones subunit beta family. Heterodimer. The active follitropin is a heterodimer composed of an alpha chain/CGA shared with other hormones and a unique beta chain/FSHB shown here.

It localises to the secreted. Functionally, together with the alpha chain CGA constitutes follitropin, the follicle-stimulating hormone, and provides its biological specificity to the hormone heterodimer. Binds FSHR, a G protein-coupled receptor, on target cells to activate downstream signaling pathways. Follitropin is involved in follicle development and spermatogenesis in reproductive organs. The sequence is that of Follitropin subunit beta (FSHB) from Panthera tigris altaica (Siberian tiger).